The chain runs to 319 residues: Acetyl-coenzyme A carboxylase carboxyl transferase subunit alpha (319 aa).

The region spanning Asn-35–Asp-296 is the CoA carboxyltransferase C-terminal domain.

It belongs to the AccA family. In terms of assembly, acetyl-CoA carboxylase is a heterohexamer composed of biotin carboxyl carrier protein (AccB), biotin carboxylase (AccC) and two subunits each of ACCase subunit alpha (AccA) and ACCase subunit beta (AccD).

Its subcellular location is the cytoplasm. It carries out the reaction N(6)-carboxybiotinyl-L-lysyl-[protein] + acetyl-CoA = N(6)-biotinyl-L-lysyl-[protein] + malonyl-CoA. It participates in lipid metabolism; malonyl-CoA biosynthesis; malonyl-CoA from acetyl-CoA: step 1/1. Component of the acetyl coenzyme A carboxylase (ACC) complex. First, biotin carboxylase catalyzes the carboxylation of biotin on its carrier protein (BCCP) and then the CO(2) group is transferred by the carboxyltransferase to acetyl-CoA to form malonyl-CoA. This Salmonella dublin (strain CT_02021853) protein is Acetyl-coenzyme A carboxylase carboxyl transferase subunit alpha.